A 364-amino-acid polypeptide reads, in one-letter code: MAQQTPLYEQHTLCGARMVDFHGWMMPLHYGSQIDEHHAVRGDAGMFDVSHMTIVDFHGSRIREFLRYLLANDVAKLTTPGKALYTGMLTASAGVIDDLIVYFLSEDYFRLVVNSATREKDLAWISEQAEPYGLEITVRDDLSLIAVQGPQAKAKAATLFTDAQRQAVEGMKPFFGVQAGDLFIATTGYTGEAGYEIVMPNEQAADFWRGLLDAGVKPCGLGARDTLRLEAGMNLYGQEMDEGVSPLAANMGWTIAWEPADRNFIGREALEMQREKGTEQLVGLVMTEKGVLRGGLPVRFTDSDGNQKEGIITSGTFSPTLGYSIALARVPAGIGDTAVVQIRNREMPVKVTKPGFVRNGKAIV.

The protein belongs to the GcvT family. In terms of assembly, the glycine cleavage system is composed of four proteins: P, T, L and H.

The catalysed reaction is N(6)-[(R)-S(8)-aminomethyldihydrolipoyl]-L-lysyl-[protein] + (6S)-5,6,7,8-tetrahydrofolate = N(6)-[(R)-dihydrolipoyl]-L-lysyl-[protein] + (6R)-5,10-methylene-5,6,7,8-tetrahydrofolate + NH4(+). Its function is as follows. The glycine cleavage system catalyzes the degradation of glycine. The protein is Aminomethyltransferase of Klebsiella pneumoniae subsp. pneumoniae (strain ATCC 700721 / MGH 78578).